The sequence spans 57 residues: Potassium channel toxin KTx1 (57 aa).

The signal sequence occupies residues 1-13; the sequence is FLVLLLVSLMCYA. A propeptide spanning residues 14 to 18 is cleaved from the precursor; the sequence is EIAEG. Cystine bridges form between C24–C37, C30–C42, and C36–C51.

This sequence belongs to the scorpion calcin-like family. KTX subfamily. Expressed by the venom gland.

It is found in the secreted. Functionally, this recombinant peptide inhibits voltage-gated potassium channels mKv1.3/KCNA3 (IC(50)=1.70 uM), mKv1.1/KCNA1 (10 uM inhibits 40% of currents) and hKv1.2/KCNA2 (10 uM inhibits 42% of currents). May also increase intracellular calcium release through the activation of nuclear inositol 1,4,5-trisphosphate receptors (ITPR) of cardiomyocytes, thereby causing an increase in the contraction frequency of these cells. The polypeptide is Potassium channel toxin KTx1 (Isometrus maculatus (Lesser brown scorpion)).